We begin with the raw amino-acid sequence, 258 residues long: Probable glycerol uptake facilitator protein (258 aa).

2 helical membrane passes run 11-31 (WWFLAELIGTFILIIFGNGAV) and 50-70 (TVALTWGIGVLFGVLTANAIF). Residues 77–79 (NPA) carry the NPA 1 motif. The next 3 membrane-spanning stretches (helical) occupy residues 95-115 (ALIWPGFVIGILAQFLGAMIA), 152-172 (FLTEFIATLILIGGVVAASHF), and 180-200 (VPPGFMGLWLVAGIIIAFGGA). The NPA 2 motif lies at 206-208 (NPA). The chain crosses the membrane as a helical span at residues 233-253 (WIPVIAPLSAGLVLSIIIGFS).

This sequence belongs to the MIP/aquaporin (TC 1.A.8) family.

The protein resides in the cell membrane. It catalyses the reaction glycerol(in) = glycerol(out). In terms of biological role, mediates glycerol diffusion across the cytoplasmic membrane via a pore-type mechanism. This Mycoplasma genitalium (strain ATCC 33530 / DSM 19775 / NCTC 10195 / G37) (Mycoplasmoides genitalium) protein is Probable glycerol uptake facilitator protein (glpF).